The primary structure comprises 359 residues: Homoserine O-acetyltransferase (359 aa).

The AB hydrolase-1 domain maps to 49–332 (VLICHALTGS…QSSYGHDAFL (284 aa)). The active-site Nucleophile is the S143. R212 serves as a coordination point for substrate. Catalysis depends on residues D299 and H328. D329 lines the substrate pocket.

Belongs to the AB hydrolase superfamily. MetX family. Homodimer.

The protein localises to the cytoplasm. It carries out the reaction L-homoserine + acetyl-CoA = O-acetyl-L-homoserine + CoA. It functions in the pathway amino-acid biosynthesis; L-methionine biosynthesis via de novo pathway; O-acetyl-L-homoserine from L-homoserine: step 1/1. Transfers an acetyl group from acetyl-CoA to L-homoserine, forming acetyl-L-homoserine. The polypeptide is Homoserine O-acetyltransferase (Trichormus variabilis (strain ATCC 29413 / PCC 7937) (Anabaena variabilis)).